The following is a 147-amino-acid chain: Hemoglobin subunit epsilon (147 aa).

The Globin domain maps to 3-147; sequence HFTAEEKAAV…VAIALAHKYH (145 aa). Phosphoserine occurs at positions 14 and 51. Residues His64 and His93 each contribute to the heme b site.

Belongs to the globin family. Heterotetramer of two alpha chains and two epsilon chains in early embryonic hemoglobin Gower-2; two zeta chains and two epsilon chains in early embryonic hemoglobin Gower-1. In terms of tissue distribution, red blood cells.

The epsilon chain is a beta-type chain of early mammalian embryonic hemoglobin. The chain is Hemoglobin subunit epsilon (HBE1) from Pongo pygmaeus (Bornean orangutan).